The chain runs to 662 residues: Transketolase (662 aa).

H28 serves as a coordination point for substrate. Thiamine diphosphate is bound by residues H68 and 115–117 (GPL). D156 contributes to the Mg(2+) binding site. Positions 157 and 186 each coordinate thiamine diphosphate. The Mg(2+) site is built by N186 and I188. Positions 261, 356, and 383 each coordinate substrate. A thiamine diphosphate-binding site is contributed by H261. Catalysis depends on E410, which acts as the Proton donor. F436 serves as a coordination point for thiamine diphosphate. Substrate-binding residues include H460, D468, and R519.

Belongs to the transketolase family. In terms of assembly, homodimer. Requires Mg(2+) as cofactor. The cofactor is Ca(2+). Mn(2+) is required as a cofactor. Co(2+) serves as cofactor. It depends on thiamine diphosphate as a cofactor.

It carries out the reaction D-sedoheptulose 7-phosphate + D-glyceraldehyde 3-phosphate = aldehydo-D-ribose 5-phosphate + D-xylulose 5-phosphate. Its pathway is carbohydrate biosynthesis; Calvin cycle. It participates in carbohydrate degradation; pentose phosphate pathway. In terms of biological role, catalyzes the transfer of a two-carbon ketol group from a ketose donor to an aldose acceptor, via a covalent intermediate with the cofactor thiamine pyrophosphate. This is Transketolase (tkt) from Staphylococcus aureus (strain MRSA252).